The primary structure comprises 71 residues: Pro-MCH (71 aa).

The N-terminal stretch at 1–20 (AKMNLSSYILILTFSLFSQG) is a signal peptide.

Belongs to the melanin-concentrating hormone family.

Its subcellular location is the secreted. The chain is Pro-MCH (PMCH) from Hylobates lar (Lar gibbon).